We begin with the raw amino-acid sequence, 3987 residues long: Hybrid PKS-NRPS synthetase buaA (3987 aa).

The Ketosynthase family 3 (KS3) domain occupies N5–S438. Active-site for beta-ketoacyl synthase activity residues include C176, H315, and H358. Residues V546–S872 are malonyl-CoA:ACP transacylase (MAT) domain. Residues H939 to A1072 are N-terminal hotdog fold. The PKS/mFAS DH domain occupies H939–S1240. Residues E940 to T1238 form a dehydratase (DH) domain region. H970 serves as the catalytic Proton acceptor; for dehydratase activity. The tract at residues M1087–S1240 is C-terminal hotdog fold. Catalysis depends on D1147, which acts as the Proton donor; for dehydratase activity. The interval Y1399 to M1583 is methyltransferase (MT) domain. Positions T2113–G2285 are ketoreductase (KR) domain. A Carrier 1 domain is found at R2397–M2473. S2433 carries the post-translational modification O-(pantetheine 4'-phosphoryl)serine. Residues A2489–D2561 form a disordered region. Residues H2514 to E2525 are compositionally biased toward basic and acidic residues. The span at S2532–A2550 shows a compositional bias: low complexity. The condensation (C) domain stretch occupies residues M2582–E3001. The segment at L3042 to A3448 is adenylation (A) (KR) domain. Positions A3564 to Q3644 constitute a Carrier 2 domain. An O-(pantetheine 4'-phosphoryl)serine modification is found at S3604. Residues T3680–A3916 form a reductase (R) domain region.

It in the C-terminal section; belongs to the NRP synthetase family.

Its pathway is mycotoxin biosynthesis. Functionally, hybrid PKS-NRPS synthetase; part of the gene cluster that mediates the biosynthesis of burnettramic acids, an unusual class of bolaamphiphilic pyrrolizidinediones that display potent antibacterial, antifungal, and cytotoxic activities. The first step of the biosynthesis of burnettramic acids is the hydroxylation of proline by the proline hydroxylase buaE to generate 4-hydroxyproline. The PKS-NRPS buaA and trans-enoyl reductase buaC construct the highly reduced polyketide chain, and the condensation (C) domain of buaA then catalyzes the amide bond formation with the activated 4-hydroxyproline. This is followed by the R domain releasing the nascent polyketide-peptide directly via a Dieckmann condensation to afford a tetramic acid fused to the hydroxyproline, generating the bicyclic pyrrolidinedione moiety. The cytochrome P450 monooxygenases buaD and buaG are likely responsible for the multiple hydroxylations on the polyketide chain and its terminus, although in a heterologous context, buaD does not appear to be required. Therefore, while buaG may be a multifunctional cytochrome P450 monooxygenase, it cannot be ruled out that the two secondary alcohols on the polyketide chain could have an acetate origin. Finally, the glycosyltransferase buaB transfers beta-D-mannose to the aglycone burnettramic acid A to form burnettramic acid A. Burnettramic acid B is a minor cis-pyrrolizidine epimer of burnettramic acid A and it is likely that small amounts of it form naturally in acidic environments. This Petromyces alliaceus (Aspergillus alliaceus) protein is Hybrid PKS-NRPS synthetase buaA.